The chain runs to 359 residues: Photosystem II protein D1 1 (359 aa).

The next 3 helical transmembrane spans lie at 29 to 46 (YVGW…AATI), 118 to 133 (HFLI…EWEL), and 142 to 156 (WICV…AASA). His-118 is a chlorophyll a binding site. Tyr-126 is a binding site for pheophytin a. [CaMn4O5] cluster contacts are provided by Asp-170 and Glu-189. Residues 197–218 (FHMLGVAGVFGGSLFSAMHGSL) traverse the membrane as a helical segment. His-198 contributes to the chlorophyll a binding site. Residues His-215 and 264 to 265 (SF) contribute to the a quinone site. His-215 serves as a coordination point for Fe cation. Residue His-272 coordinates Fe cation. Residues 274–288 (FLAAWPVVGIWFTAL) form a helical membrane-spanning segment. [CaMn4O5] cluster-binding residues include His-332, Glu-333, Asp-342, and Ala-344. The propeptide occupies 345 to 359 (AAESTPVALQAPAIG).

This sequence belongs to the reaction center PufL/M/PsbA/D family. In terms of assembly, PSII is composed of 1 copy each of membrane proteins PsbA, PsbB, PsbC, PsbD, PsbE, PsbF, PsbH, PsbI, PsbJ, PsbK, PsbL, PsbM, PsbT, PsbX, PsbY, PsbZ, Psb30/Ycf12, peripheral proteins PsbO, CyanoQ (PsbQ), PsbU, PsbV and a large number of cofactors. It forms dimeric complexes. The D1/D2 heterodimer binds P680, chlorophylls that are the primary electron donor of PSII, and subsequent electron acceptors. It shares a non-heme iron and each subunit binds pheophytin, quinone, additional chlorophylls, carotenoids and lipids. D1 provides most of the ligands for the Mn4-Ca-O5 cluster of the oxygen-evolving complex (OEC). There is also a Cl(-1) ion associated with D1 and D2, which is required for oxygen evolution. The PSII complex binds additional chlorophylls, carotenoids and specific lipids. serves as cofactor. Tyr-161 forms a radical intermediate that is referred to as redox-active TyrZ, YZ or Y-Z. Post-translationally, C-terminally processed by CtpA; processing is essential to allow assembly of the oxygen-evolving complex and thus photosynthetic growth.

It localises to the cellular thylakoid membrane. The catalysed reaction is 2 a plastoquinone + 4 hnu + 2 H2O = 2 a plastoquinol + O2. In terms of biological role, photosystem II (PSII) is a light-driven water:plastoquinone oxidoreductase that uses light energy to abstract electrons from H(2)O, generating O(2) and a proton gradient subsequently used for ATP formation. It consists of a core antenna complex that captures photons, and an electron transfer chain that converts photonic excitation into a charge separation. The D1/D2 (PsbA/PsbD) reaction center heterodimer binds P680, the primary electron donor of PSII as well as several subsequent electron acceptors. In Synechococcus sp. (strain CC9605), this protein is Photosystem II protein D1 1.